A 78-amino-acid polypeptide reads, in one-letter code: Large ribosomal subunit protein bL28 (78 aa).

It belongs to the bacterial ribosomal protein bL28 family.

This chain is Large ribosomal subunit protein bL28, found in Pectobacterium carotovorum subsp. carotovorum (strain PC1).